Reading from the N-terminus, the 163-residue chain is Nucleotide-binding protein Tery_2743 (163 aa).

This sequence belongs to the YajQ family.

Nucleotide-binding protein. The polypeptide is Nucleotide-binding protein Tery_2743 (Trichodesmium erythraeum (strain IMS101)).